Consider the following 574-residue polypeptide: Isocitrate dehydrogenase kinase/phosphatase (574 aa).

ATP contacts are provided by residues A315–M321 and K336. Residue D371 is part of the active site.

Belongs to the AceK family.

The protein resides in the cytoplasm. The enzyme catalyses L-seryl-[isocitrate dehydrogenase] + ATP = O-phospho-L-seryl-[isocitrate dehydrogenase] + ADP + H(+). Bifunctional enzyme which can phosphorylate or dephosphorylate isocitrate dehydrogenase (IDH) on a specific serine residue. This is a regulatory mechanism which enables bacteria to bypass the Krebs cycle via the glyoxylate shunt in response to the source of carbon. When bacteria are grown on glucose, IDH is fully active and unphosphorylated, but when grown on acetate or ethanol, the activity of IDH declines drastically concomitant with its phosphorylation. This is Isocitrate dehydrogenase kinase/phosphatase from Escherichia coli O81 (strain ED1a).